A 38-amino-acid polypeptide reads, in one-letter code: MKVKASVKKRSADDIIVRRKGRVYVINKKNRRHNQRQG.

Belongs to the bacterial ribosomal protein bL36 family.

In Acholeplasma laidlawii (strain PG-8A), this protein is Large ribosomal subunit protein bL36.